The following is a 946-amino-acid chain: Increased sodium tolerance protein 2 (946 aa).

Residues 1–121 (MSQTITSLDP…SNLTNNPKQS (121 aa)) lie on the Cytoplasmic side of the membrane. A helical transmembrane segment spans residues 122–142 (LYFAFLQNYIKWLIPFSFFGL). The Extracellular portion of the chain corresponds to 143 to 153 (SIRFLSNFTYE). The helical transmembrane segment at 154–174 (FNSTYSLFAILWTLSFTAFWL) threads the bilayer. Over 175 to 217 (YKYEPFWSDRLSKYSSFSTIEFLQDKQKAQKKASSVIMLKKCC) the chain is Cytoplasmic. A helical membrane pass occupies residues 218–238 (FIPVALLFGAILLSFQLYCFA). Residues 239 to 253 (LEIFIKQIYNGPMIS) lie on the Extracellular side of the membrane. A helical transmembrane segment spans residues 254-274 (ILSFLPTILICTFTPVLTVIY). The Cytoplasmic segment spans residues 275 to 302 (NKYFVEPMTKWENHSSVVNAKKSKEAKN). A helical transmembrane segment spans residues 303–323 (FVIIFLSSYVPLLITLFLYLP). The Extracellular segment spans residues 324-447 (MGHLLTAEIR…DANFKKLLLQ (124 aa)). Residues 448–468 (FGYLVMFSTIWPLAPFICLIV) traverse the membrane as a helical segment. The Cytoplasmic portion of the chain corresponds to 469–505 (NLIVYQVDLRKAVLYSKPEYFPFPIYDKPSSVSNTQK). A helical membrane pass occupies residues 506 to 526 (LTVGLWNSVLVMFSILGCVIT). Residues 527-563 (ATLTYMYQSCNIPGVGAHTSIHTNKAWYLANPINHSW) are Extracellular-facing. The helical transmembrane segment at 564–584 (INIVLYAVFIEHVSVAIFFLF) threads the bilayer. The Cytoplasmic segment spans residues 585-946 (SSILKSSHDD…GLLHKLKKKL (362 aa)). Disordered stretches follow at residues 617–638 (EKIPSPEFNSNNEKELVQRKGS) and 665–718 (THAN…TEKR). Residues 628 to 638 (NEKELVQRKGS) show a composition bias toward basic and acidic residues. At serine 638 the chain carries Phosphoserine. Positions 671–689 (PSSLSSASSPSLSSSSSSS) are enriched in low complexity. Phosphothreonine is present on threonine 701. Serine 704 and serine 720 each carry phosphoserine. Threonine 726 bears the Phosphothreonine mark. Serine 729 is subject to Phosphoserine. Tyrosine 730 is subject to Phosphotyrosine. Serine 757 is subject to Phosphoserine. The tract at residues 759-784 (RDAKSSAESSNATNNNTLGTESKLLP) is disordered. Positions 764–775 (SAESSNATNNNT) are enriched in low complexity. A phosphoserine mark is found at serine 793, serine 844, and serine 847. The tract at residues 846–946 (VSVATEQTKK…GLLHKLKKKL (101 aa)) is disordered. Threonine 850 is modified (phosphothreonine). Over residues 859–868 (STKNGPSRSI) the composition is skewed to polar residues. Over residues 884-893 (TTTTTTTDAT) the composition is skewed to low complexity. Residues 895–905 (PHHHHHHHRHR) are compositionally biased toward basic residues. A compositionally biased stretch (low complexity) spans 916–927 (SKTTESSSSSSA). Residues 931-946 (KPKHKKGLLHKLKKKL) are compositionally biased toward basic residues.

Interacts with BTN2.

It localises to the cell membrane. May be involved in ion homeostasis together with BTN1 or BTN2. The chain is Increased sodium tolerance protein 2 (IST2) from Saccharomyces cerevisiae (strain ATCC 204508 / S288c) (Baker's yeast).